Consider the following 430-residue polypeptide: MGKSWFSAVKKALSPEPKQKKEQKPHKSKKWFGKSKKLDVTNSGAAYSPRTVKDAKLKEIEEQQSRHAYSVAIATAAAAEAAVAAAQAAAEVVRLSALSRFPGKSMEEIAAIKIQTAFRGYMARRALRALRGLVRLKSLVQGKCVRRQATSTLQSMQTLARVQYQIRERRLRLSEDKQALTRQLQQKHNKDFDKTGENWNDSTLSREKVEANMLNKQVATMRREKALAYAFSHQNTWKNSTKMGSQTFMDPNNPHWGWSWLERWMAARPNENHSLTPDNAEKDSSARSVASRAMSEMIPRGKNLSPRGKTPNSRRGSSPRVRQVPSEDSNSIVSFQSEQPCNRRHSTCGSIPSTRDDESFTSSFSQSVPGYMAPTQAAKARARFSNLSPLSSEKTAKKRLSFSGSPKTVRRFSGPPKLESNVTKKDTNLA.

The interval 1–36 (MGKSWFSAVKKALSPEPKQKKEQKPHKSKKWFGKSK) is disordered. The Nuclear localization signal 1 motif lies at 9 to 16 (VKKALSPE). Over residues 23–35 (QKPHKSKKWFGKS) the composition is skewed to basic residues. The 29-residue stretch at 107–135 (EEIAAIKIQTAFRGYMARRALRALRGLVR) folds into the IQ domain. The stretch at 170-224 (RLRLSEDKQALTRQLQQKHNKDFDKTGENWNDSTLSREKVEANMLNKQVATMRRE) forms a coiled coil. Positions 213 to 231 (MLNKQVATMRREKALAYAF) are calmodulin-binding. Disordered stretches follow at residues 271–368 (ENHS…SQSV) and 385–430 (SNLS…TNLA). A compositionally biased stretch (low complexity) spans 286–295 (ARSVASRAMS). Residues 326–340 (SEDSNSIVSFQSEQP) show a composition bias toward polar residues. The Nuclear localization signal 2 motif lies at 396–403 (AKKRLSFS).

It belongs to the IQD family. In terms of assembly, binds to multiple calmodulin (CaM) in the presence of Ca(2+) and CaM-like proteins.

It is found in the nucleus. The protein localises to the nucleolus. The protein resides in the cytoplasm. Its subcellular location is the cytoskeleton. Functionally, may be involved in cooperative interactions with calmodulins or calmodulin-like proteins. Recruits calmodulin proteins to microtubules, thus being a potential scaffold in cellular signaling and trafficking. May associate with nucleic acids and regulate gene expression at the transcriptional or post-transcriptional level. This is Protein IQ-DOMAIN 3 from Arabidopsis thaliana (Mouse-ear cress).